We begin with the raw amino-acid sequence, 429 residues long: Enolase (429 aa).

Glutamine 163 contacts (2R)-2-phosphoglycerate. Glutamate 205 acts as the Proton donor in catalysis. Mg(2+) is bound by residues aspartate 242, glutamate 285, and aspartate 312. 4 residues coordinate (2R)-2-phosphoglycerate: lysine 337, arginine 366, serine 367, and lysine 388. Lysine 337 functions as the Proton acceptor in the catalytic mechanism.

Belongs to the enolase family. As to quaternary structure, component of the RNA degradosome, a multiprotein complex involved in RNA processing and mRNA degradation. The cofactor is Mg(2+).

It localises to the cytoplasm. The protein resides in the secreted. It is found in the cell surface. It catalyses the reaction (2R)-2-phosphoglycerate = phosphoenolpyruvate + H2O. It functions in the pathway carbohydrate degradation; glycolysis; pyruvate from D-glyceraldehyde 3-phosphate: step 4/5. Functionally, catalyzes the reversible conversion of 2-phosphoglycerate (2-PG) into phosphoenolpyruvate (PEP). It is essential for the degradation of carbohydrates via glycolysis. This chain is Enolase, found in Alkalilimnicola ehrlichii (strain ATCC BAA-1101 / DSM 17681 / MLHE-1).